The primary structure comprises 2226 residues: MVLAGLIRKLGHQLAEIRERALKSILCKIEHNLICYADLIQERLLFLHLLEWFNFPSVPMKEEVLNLLSRLVKYSPAVQHLIDLGAVEFLSKLRPNVEPVIQAEIDGILDGLFILPSEVPALCSSSYHTDQIELSQQPEVLTGYFPQDKSNFQQMEVPPGPAGNQAVKWLRFSVFPWLPLTTTDRHVLSSNESSLRSSNHTLIWNTCELLKDVIMQDFPAEIFLQRPKIVQGLLCLVKLAFGGDGKHRLALQSVSCLQQLCTSLRNRLNFYRDPNFFSSRQDTVSQNSSLSYCHEARGPYHSPNPSPGSSSSRPSVVGRTGQRPRGDGQDWDAVSSSGSSSHTHVNSRISVHSPLDVAPVDLPELEAEDTLELQFQQLSLPQFCISTLEAAAPLLRTGSREMIIRVLELLAEDMLLIGQAISSEIWDDNSLFAINVKEKLLQVLGSLGETMCYRKTSFSMEQAEAVLVHHRMAFVSISLFTVRLLQLLLPVEKASEFLPESMSAALFFVSLDMPISLEYPEIHDTVVAYLEQLDSENYSIYKRTAEAVYSIECTCNFLSDVGKEGEKNLLELVELADQALRSFSYHQHSPLIKEIICICSKIWKSAQASPLLQGESQKVFLHMLSHPLPQVKVETYQCCLEIVKECLGVQNVTKPVSSLCSGIHFLLHPKVLYEISAFGIQESKNEVNAAAKAILLYLLQGRLMMTALTWNKFIESLAPVIPVLQGYADTEDPLGNCILLLSKVSSEAGEGALPCTARLKSVLRLLLVKKPSVRSLALKLLAFHLTSEEGADKKRPFIDAGVLSRVTNLFIVKKPIDLKLDDRRELVIKLETVKKVCDIFTSDDVDLVLRKSAAEQLAVIMQDIKMHTVVKKLCLVEKIIGHLNEFVGQDGEVIECLIQPCLTLLRKVLYADPVIRVSLSQQASLLTLLLRVSLIFHEDCTVVAEVGALFCLLLFDEVSRMDTWSDTLSDKPSLSSVFSLPVSVFRRYHLPVHVTGHHAVSPYSIVLPLPTECLTLKPVSDMLRIAWNLAWYHGSDNLLKQMTSEAKIQEFLDTLQLSTEDILALKITYTDSGLKDCLQSIIQAGGHRDVRAAITRMSFYLLNDKLSLKDDIGPCGVTLKSLAWHTVLNRFLQVLPACTEDEKLLIDIIHFLNKLIKEQRKNPSIELLNWILELLLRHNPSPLLDLLVLTDSHAGEETDDVRTAVRQQLQKELISLLNSLLLVFMTVSDRKCLELFYVFQTQLSLKLLQCLRVTDAPHFYGLPSLERTLAGMAHLTAFPGWSAHSPLSKPLEICGKYLSGLLEVITSFYVERGGNAMSFMGKGVTKSTGLCLLHLSHEMIVQAPGSEWMPLWFLPLGSHSEEHAPTQQGLAWLIPLWVDRDPEVRFTSLGLGSALTTIEAGCVALANSCQNISGGLWGTVVNILLDQSECSLVRREAAFILQNLLVIPMPSEIIKDYTWQGPCVHDEDSGLSLSGKPALQALLYHCRFYEHLTHMVKHCYVGRYIFDFNFSAFTETSEYSDLNGLDDSFKFWRAPSGTSTQDHEPSSLSTSETMVAASVVSSEIQPLLPSTLLPETALDQFVTQGQREMRPVRPRDSLLSTSLNRQYVFVTPSLLSAVCSLLDNLLAVTPRDAANAFQQAHLIELLCSTVDASLIEMCIQELKTPLPLPSAVEHIQAQASFFLEYLSSLSQLLKSCLLVEPKLVTQDELLKPLITNVIRVLIVCPKDVLDVQLVLAFYRTWTHLFDLLATLLRKAGAVSLVPLTSALAKHWEAVTDTLCRCVGLSFKCPALTIASLQFLSVLLAEEEKRRVQDKDKTNEGQAPTVALLLDGTQGSLSSSERLNETILQCYEGISPKDVLKRVAANALLSLLAVSRRAQRHALRSDLIENCMEQMKHINAQLNLDLLRPGKAVLKKKEDGFIKELSITMQLLRNCLYQNEECKVAALEARLVPVLHSLWPWLLMEDSLMQIALQLLCVYTANFPAGCSSLCWSNYGQCIQTAHRGTPSSSLILCILKLASQMPAENTTIQQLVFMFLSNLALSHDCKGVIQKSNFLQHFLSLTLPKGGNQHLSTVAILWLKLLLNMSFGEDGQQMILRLDGCLDLLIEMSKYKHKSSPHMPLLIFHNICFSPANKPKILANEKVVTLLAACLESENQTAQRIGAASLWALTYNYQKAKATLKNPSIKRKVDEAYSIAKRTLSNSEENPLNSYYLKCLENLVQLLNYS.

Positions 295–346 (EARGPYHSPNPSPGSSSSRPSVVGRTGQRPRGDGQDWDAVSSSGSSSHTHVN) are disordered. Positions 307-319 (PGSSSSRPSVVGR) are enriched in low complexity. A Phosphoserine modification is found at S311. K813 carries the N6-acetyllysine modification.

This sequence belongs to the rotatin family. In terms of assembly, interacts with PPP1R35; this interaction allows the mutual recruitment to the centriole.

It is found in the cytoplasm. It localises to the cytoskeleton. The protein localises to the cilium basal body. Its function is as follows. Involved in the genetic cascade that governs left-right specification. Required for correct asymmetric expression of NODAL, LEFTY and PITX2. This chain is Rotatin, found in Mus musculus (Mouse).